We begin with the raw amino-acid sequence, 154 residues long: Transcriptional repressor NrdR (154 aa).

A zinc finger lies at 3 to 34 (CPFCRHPDSRVVDSRETDEGQAIRRRRSCPEC). The ATP-cone domain occupies 46-136 (LAVVKRSGVT…VYRSFSSAED (91 aa)).

It belongs to the NrdR family. The cofactor is Zn(2+).

Its function is as follows. Negatively regulates transcription of bacterial ribonucleotide reductase nrd genes and operons by binding to NrdR-boxes. The polypeptide is Transcriptional repressor NrdR (Mycolicibacterium vanbaalenii (strain DSM 7251 / JCM 13017 / BCRC 16820 / KCTC 9966 / NRRL B-24157 / PYR-1) (Mycobacterium vanbaalenii)).